Reading from the N-terminus, the 312-residue chain is Small ribosomal subunit protein uS2 (312 aa).

Residues 232 to 312 (RASGAAERDE…AAPEGEAAAE (81 aa)) are disordered. Residues 245–284 (REGRDDRGDRRDDRRGPRRGDRRDDRRDRGGDRGGDRRGP) show a composition bias toward basic and acidic residues. A compositionally biased stretch (low complexity) spans 291-312 (AAPVASAEPAAEAAPEGEAAAE).

The protein belongs to the universal ribosomal protein uS2 family.

This Myxococcus xanthus (strain DK1622) protein is Small ribosomal subunit protein uS2.